The following is a 209-amino-acid chain: Large ribosomal subunit protein uL3 (209 aa).

Positions 119–145 are disordered; sequence AIKRHGQSRGPMSHGSHFHRAPGSVGM.

The protein belongs to the universal ribosomal protein uL3 family. As to quaternary structure, part of the 50S ribosomal subunit. Forms a cluster with proteins L14 and L19.

Functionally, one of the primary rRNA binding proteins, it binds directly near the 3'-end of the 23S rRNA, where it nucleates assembly of the 50S subunit. The chain is Large ribosomal subunit protein uL3 from Staphylococcus aureus (strain COL).